The chain runs to 517 residues: Crotonobetaine/carnitine--CoA ligase (517 aa).

This sequence belongs to the ATP-dependent AMP-binding enzyme family.

The catalysed reaction is 4-(trimethylamino)butanoate + ATP + CoA = 4-(trimethylamino)butanoyl-CoA + AMP + diphosphate. It carries out the reaction crotonobetaine + ATP + CoA = crotonobetainyl-CoA + AMP + diphosphate. The enzyme catalyses (R)-carnitine + ATP + CoA = (R)-carnitinyl-CoA + AMP + diphosphate. Its pathway is amine and polyamine metabolism; carnitine metabolism. Its function is as follows. Catalyzes the transfer of CoA to carnitine, generating the initial carnitinyl-CoA needed for the CaiB reaction cycle. Also has activity toward crotonobetaine and gamma-butyrobetaine. The polypeptide is Crotonobetaine/carnitine--CoA ligase (Shigella sonnei (strain Ss046)).